The following is a 122-amino-acid chain: Large ribosomal subunit protein uL14 (122 aa).

The protein belongs to the universal ribosomal protein uL14 family. In terms of assembly, part of the 50S ribosomal subunit. Forms a cluster with proteins L3 and L19. In the 70S ribosome, L14 and L19 interact and together make contacts with the 16S rRNA in bridges B5 and B8.

Binds to 23S rRNA. Forms part of two intersubunit bridges in the 70S ribosome. In Staphylococcus carnosus (strain TM300), this protein is Large ribosomal subunit protein uL14.